A 451-amino-acid chain; its full sequence is UPF0210 protein Cbei_2352 (451 aa).

It belongs to the UPF0210 family. Homodimer.

In Clostridium beijerinckii (strain ATCC 51743 / NCIMB 8052) (Clostridium acetobutylicum), this protein is UPF0210 protein Cbei_2352.